We begin with the raw amino-acid sequence, 446 residues long: Phosphoglucosamine mutase (446 aa).

Serine 100 acts as the Phosphoserine intermediate in catalysis. Mg(2+)-binding residues include serine 100, aspartate 241, aspartate 243, and aspartate 245. Serine 100 is modified (phosphoserine).

It belongs to the phosphohexose mutase family. The cofactor is Mg(2+). Post-translationally, activated by phosphorylation.

It carries out the reaction alpha-D-glucosamine 1-phosphate = D-glucosamine 6-phosphate. Its function is as follows. Catalyzes the conversion of glucosamine-6-phosphate to glucosamine-1-phosphate. This is Phosphoglucosamine mutase from Methylobacterium nodulans (strain LMG 21967 / CNCM I-2342 / ORS 2060).